A 469-amino-acid polypeptide reads, in one-letter code: Uronate isomerase (469 aa).

The protein belongs to the metallo-dependent hydrolases superfamily. Uronate isomerase family.

The catalysed reaction is D-glucuronate = D-fructuronate. It carries out the reaction aldehydo-D-galacturonate = keto-D-tagaturonate. The protein operates within carbohydrate metabolism; pentose and glucuronate interconversion. The protein is Uronate isomerase of Edwardsiella ictaluri (strain 93-146).